The following is a 272-amino-acid chain: MVKAIKIDNLKYSYDERSLFSDFNLDIDAGQWVALVGHNGSGKSTLAKLILGLLVAEQGDIDVFDERLTVETVHHVRSKIGMVFQNPDNQFVGATVADDVAFGLENIQVESSEMPQKIDNALTIVGMQEFKNREPHTLSGGQKQRVALASVLALQPKIIILDEATAMLDPDGRATVMETLQKLKKQFGKELTLVTITHDMDEATLADRVVVINDGQKILDGTPAEVFSQRKALHENGLELPFANELAFHLNEKPNKYMDERELIQWLSTLNK.

The ABC transporter domain occupies 5–239 (IKIDNLKYSY…RKALHENGLE (235 aa)). Residue 37–44 (GHNGSGKS) coordinates ATP. E163 serves as the catalytic Proton acceptor.

The protein belongs to the ABC transporter superfamily. Energy-coupling factor EcfA family. As to quaternary structure, forms a stable energy-coupling factor (ECF) transporter complex probably composed of 2 membrane-embedded substrate-binding proteins (S component), 2 ATP-binding proteins (A component) and 2 transmembrane proteins (T component). This complex interacts with a number of substrate-specific components, including FolT, PanT and RibU for 5-formyltetrahydrofolate, pantothenate and riboflavin respectively.

It localises to the cell membrane. Its function is as follows. ATP-binding (A) component of a common energy-coupling factor (ECF) ABC-transporter complex. Unlike classic ABC transporters this ECF transporter provides the energy necessary to transport a number of different substrates including 5-formyltetrahydrofolate, pantothenate and riboflavin. Expression of the complex plus FolT in E.coli allows 5-formyltetrahydrofolate uptake; 5-formyltetrahydrofolate is not taken up in the absence of FolT or the EcfA1A2T complex. This Leuconostoc mesenteroides subsp. mesenteroides (strain ATCC 8293 / DSM 20343 / BCRC 11652 / CCM 1803 / JCM 6124 / NCDO 523 / NBRC 100496 / NCIMB 8023 / NCTC 12954 / NRRL B-1118 / 37Y) protein is Energy-coupling factor transporter ATP-binding protein EcfA1.